The chain runs to 1544 residues: Protein mahjong (1544 aa).

The interval 1–110 is disordered; that stretch reads MSEGSGSENA…AAADRRQATK (110 aa). Residues 10–35 show a composition bias toward low complexity; it reads AAAAEAAAEAEAATEAALMAEAVAVA. Over residues 38–91 the composition is skewed to acidic residues; it reads SDEEEQPEAEDMPEQAGDNQEEDAAEQQDGGEPEADEDADADDAMSVENAENES. 2 positions are modified to phosphoserine: Ser-565 and Ser-569. Positions 912–944 constitute a LisH domain; it reads NKQQLYQLIFEHLESNGLSQTAQMLQREVGLPL. Disordered regions lie at residues 946 to 973 and 987 to 1059; these read TPTT…SRNR and GNGD…LAED. Phosphoserine is present on Ser-955. Residues 961-971 show a composition bias toward low complexity; the sequence is SLPSGSSSLSR. Positions 1016-1027 are enriched in polar residues; that stretch reads PNFSSLNTTQTP. 2 short sequence motifs (DWD box) span residues 1302 to 1309 and 1338 to 1345; these read VLWDVRSG and EVWDLRTF. Disordered stretches follow at residues 1447–1475 and 1487–1544; these read KSER…ENTF and LRNL…SSDD. Acidic residues-rich tracts occupy residues 1451-1467 and 1495-1535; these read SEEE…EDGS and NDDE…DVLE.

Belongs to the VPRBP/DCAF1 family. As to quaternary structure, component of the CUL4-RBX1-DDB1-DCAF1 E3 ubiquitin-protein ligase complex. Interacts with l(2)gl.

The protein localises to the nucleus. It participates in protein modification; protein ubiquitination. Its function is as follows. Probable substrate recognition component of tsome E3 ubiquitin-protein ligase complex. Plays a key role in cell competition via its interaction with l(2)gl. The protein is Protein mahjong (mahj) of Drosophila melanogaster (Fruit fly).